Here is a 304-residue protein sequence, read N- to C-terminus: Mycothiol acetyltransferase (304 aa).

N-acetyltransferase domains lie at 16–155 and 164–304; these read AHVE…RTGL and VALS…YRRA. Glutamate 46 provides a ligand contact to 1D-myo-inositol 2-(L-cysteinylamino)-2-deoxy-alpha-D-glucopyranoside. 87 to 89 serves as a coordination point for acetyl-CoA; the sequence is LVV. The 1D-myo-inositol 2-(L-cysteinylamino)-2-deoxy-alpha-D-glucopyranoside site is built by glutamate 190, lysine 230, and glutamate 237. Acetyl-CoA contacts are provided by residues 241 to 243 and 248 to 254; these read LGV and AARGLGS. Tyrosine 275 is a binding site for 1D-myo-inositol 2-(L-cysteinylamino)-2-deoxy-alpha-D-glucopyranoside.

This sequence belongs to the acetyltransferase family. MshD subfamily. In terms of assembly, monomer.

It catalyses the reaction 1D-myo-inositol 2-(L-cysteinylamino)-2-deoxy-alpha-D-glucopyranoside + acetyl-CoA = mycothiol + CoA + H(+). Functionally, catalyzes the transfer of acetyl from acetyl-CoA to desacetylmycothiol (Cys-GlcN-Ins) to form mycothiol. The protein is Mycothiol acetyltransferase of Clavibacter sepedonicus (Clavibacter michiganensis subsp. sepedonicus).